Here is a 295-residue protein sequence, read N- to C-terminus: Acetaldehyde dehydrogenase 2 (295 aa).

17–20 (TGNI) serves as a coordination point for NAD(+). Residue Cys-132 is the Acyl-thioester intermediate of the active site. NAD(+)-binding positions include 164-172 (SVGPASRAN) and Asn-275.

Belongs to the acetaldehyde dehydrogenase family.

The enzyme catalyses acetaldehyde + NAD(+) + CoA = acetyl-CoA + NADH + H(+). In Salinispora arenicola (strain CNS-205), this protein is Acetaldehyde dehydrogenase 2.